Here is a 1346-residue protein sequence, read N- to C-terminus: Toll-like receptor Tollo (1346 aa).

Residues 1–21 (MLATTHMLYVLIATCVIPIFG) form the signal peptide. Over 22 to 1021 (AALSKTVLYQ…NQPPKLDYIP (1000 aa)) the chain is Extracellular. Residues Asn63, Asn112, and Asn126 are each glycosylated (N-linked (GlcNAc...) asparagine). LRR repeat units lie at residues 97-120 (LVELRDLTIEYCKLGNLTDGSFRG), 124-146 (LRNLTIRTHNGDWSTMSLEMASN), 151-174 (FRQLERLDLSLNNIWLIPDGMVCP), 176-198 (KSLQHLNASYNKIQDISNFYFSA), 209-232 (GSTLQSLDLSANKMVSLPTAMLSA), 234-256 (GRLTHLNMAKNSMSFLADRAFEG), 257-280 (LLSLRVVDLSANRLTSLPPELFAE), 282-304 (KQLQEIYLRNNSINVLAPGIFGE), 306-330 (AELLVLDLASNELNSQWINAATFVG), 331-354 (LKRLMMLDLSANKISRLEAHIFRP), 355-378 (LASLQILKLEDNYIDQLPGGIFAD), 380-402 (TNLHTLILSRNRISVIEQRTLQG), 404-426 (KNLLVLSLDFNRISRMDQRSLVN), 427-450 (CSQLQDLHLNDNKLQAVPEALAHV), 452-473 (LLKTLDVGENMISQIENTSITQ), 474-497 (LESLYGLRMTENSLTHIRRGVFDR), 498-521 (MSSLQILNLSQNKLKSIEAGSLQR), 523-544 (SQLQAIRLDGNQLKSIAGLFTE), 546-568 (PNLVWLNISGNRLEKFDYSHIPI), 570-591 (LQWLDVRANRITQLGNYFEIES), 593-614 (LSLSTFDASYNLLTEITASSIP), 615-637 (NSVEVLYLNDNQISKIQPYTFFK), and 638-661 (KPNLTRVDLVRNRLTTLEPNALRL). A glycan (N-linked (GlcNAc...) asparagine) is linked at Asn182. The N-linked (GlcNAc...) asparagine glycan is linked to Asn291. Asn426 carries N-linked (GlcNAc...) asparagine glycosylation. An N-linked (GlcNAc...) asparagine glycan is attached at Asn468. The N-linked (GlcNAc...) asparagine glycan is linked to Asn505. A glycan (N-linked (GlcNAc...) asparagine) is linked at Asn552. Asn640 carries N-linked (GlcNAc...) asparagine glycosylation. 4 disulfide bridges follow: Cys682/Cys710, Cys684/Cys733, Cys757/Cys763, and Cys761/Cys776. LRR repeat units follow at residues 790–813 (PMDSTQLYLDGNNFRELQSHAFIG), 814–837 (RKRLKVLHLNHSRIEVLHNRTFYG), 838–861 (LLELEVLQLQSNQLKALNGNEFQG), 863–885 (DNLQELYLQHNAIATIDTLTFTH), 887–909 (YHLKILRLDHNAITSFAVWNFLP), and 912–938 (LNELRLASNPWTCSCEFIDKLRDYINR). N-linked (GlcNAc...) asparagine glycans are attached at residues Asn823 and Asn832. Residues Cys924 and Cys950 are joined by a disulfide bond. Asn956 and Asn1000 each carry an N-linked (GlcNAc...) asparagine glycan. The chain crosses the membrane as a helical span at residues 1022 to 1042 (ILVAILTAFIFVMICISLVFI). Residues 1043–1346 (FRQEMRVWCH…PTPASRNLHM (304 aa)) lie on the Cytoplasmic side of the membrane. The TIR domain occupies 1074 to 1209 (KLFDAFVSYS…LFWQKLRFAL (136 aa)). The segment at 1235 to 1346 (HHHHHVHQQA…PTPASRNLHM (112 aa)) is disordered. A compositionally biased stretch (low complexity) spans 1267–1300 (PGSFRRQPSLHQQQQQQQQIRGNNNTTQQQQQQQ).

The protein belongs to the Toll-like receptor family. As to quaternary structure, may interact (via the extracellular domain) with 18w (via the extracellular domain).

The protein localises to the cell membrane. The protein resides in the apical cell membrane. In terms of biological role, toll-related receptor. Probably specific to larval innate immunity. Involved in the tracheal immune response of larvae to Gram-negative and perhaps Gram-positive bacteria; upon infection it negatively regulates the immune deficiency (Imd) signaling cascade specifically in the respiratory epithelium to prevent the overexpression of antimicrobial peptides (AMP). Involved in the NF-kappa-B-dependent apoptosis of unfit cells during cell competition. Involved in neuron-specific glycosylation. Positively controls the neuromuscular junction (NMJ) growth in presynaptic motorneurons, probably via the JNK pathway. During development of the peripheral nervous system, may function in the NF-kappa-B (rel) regulatory cascade to repress expression of the neuron-specific genes sc and ase in non-neuronal cells. Promotes heterophilic cell adhesion with 18w in vitro. May have a minor role in leg development. May be involved in determining the proximal cell fate in the wing, possibly by negatively regulating the Dpp signaling pathway. May also be involved in the Dpp signaling pathway in the eye. Possibly functions with 18w and Toll-6 during convergent extension, to help direct proper planar cell polarity, cell intercalation and axis elongation. This chain is Toll-like receptor Tollo, found in Drosophila melanogaster (Fruit fly).